Here is a 681-residue protein sequence, read N- to C-terminus: Cryptochrome-1 (681 aa).

Residues 1–489 (MSGSVSGCGS…AKARLHEALS (489 aa)) are CNT1, binds chromophores to sense blue light and mediate CRY dimerization. The Photolyase/cryptochrome alpha/beta domain occupies 12–141 (GCSIVWFRRD…AVRSFNADLL (130 aa)). Cysteines 80 and 190 form a disulfide. Tyrosine 235 is an FAD binding site. A Mg(2+)-binding site is contributed by asparagine 238. Arginine 239 is a binding site for ATP. Lysine 241, serine 244, and threonine 246 together coordinate Mg(2+). FAD is bound by residues 247 to 251 (TSFLS) and serine 293. Mg(2+) is bound at residue histidine 358. Residues aspartate 359 and 390–392 (DAD) each bind FAD. Residue 359–360 (DR) participates in ATP binding. Aspartate 409 contributes to the ATP binding site. Residues 490 to 681 (QMWQLEAASR…LNWRRLSQTG (192 aa)) form a CCT1/CCE1, mediates blue light signaling region. 2 disordered regions span residues 525–598 (RDIT…EPAS) and 616–664 (STED…TSSY). Residues 583–598 (MVNTNQAQQRRAEPAS) show a composition bias toward polar residues. Serine 616 carries the phosphoserine modification. The residue at position 621 (threonine 621) is a Phosphothreonine.

It belongs to the DNA photolyase class-1 family. In terms of assembly, homodimer. Interacts with ADO1, COP1 and PHYA. Interacts specifically with the dark/far-red (Pr) state of PHYB, but not with the red light-activated (Pfr). Interacts with PIF4 and PIF5 in the nucleus in response to low blue light (LBL). Binds to SPA1 and SPA4 in response to blue light, this interaction prevents SPA1/COP1 complex formation and thus avoid COP1-dependent degradation of the transcription factor HY5 by the proteasome and promotes hypocotyl elongation. Interacts with TCP2. Binding to ATP mediates conformational changes which facilitate flavin binding. FAD serves as cofactor. (6R)-5,10-methylene-5,6,7,8-tetrahydrofolate is required as a cofactor. In terms of processing, autophosphorylated; in response to blue light and when in complex with FAD cofactor. Kinase activity is optimal in the presence of magnesium ions, about 30 percent of the optimal activity in the presence of manganese ions, but inactive with calcium ions. Adopts an open conformation when phosphorylated upon photoexcitation and thus interacts with signaling partner proteins. In terms of tissue distribution, widely expressed. Expressed in the aerial tissues (e.g. cotyledons and leaf primordia), but not detected in the roots.

It localises to the cytoplasm. Its subcellular location is the nucleus. The protein resides in the PML body. Light exposure induces a conformational change in the C-terminal domain CCT1 required for activity. Functionally, photoreceptor that mediates primarily blue light inhibition of hypocotyl elongation and photoperiodic control of floral initiation, and regulates other light responses, including circadian rhythms, tropic growth, stomata opening, guard cell development, root development, bacterial and viral pathogen responses, abiotic stress responses, cell cycles, programmed cell death, apical dominance, fruit and ovule development, seed dormancy, and magnetoreception. Photoexcited cryptochromes interact with signaling partner proteins to alter gene expression at both transcriptional and post-translational levels and, consequently, regulate the corresponding metabolic and developmental programs. Blue-light absorbing flavoprotein that activates reversible flavin photoreduction via an electron transport chain comprising a tryptophan triad (W-324, W-377 and W-400), accompanied by a large conformational change upon photoexcitation, or via an alternative electron transport that involves small metabolites, including NADPH, NADH, and ATP. The half-life of the activated signaling state is about 5 minutes. Also involved in the detection of blue/green ratio in light (shade under leaf canopies) and subsequent adaptations on plant growth and development. In darkness, the dark reoxidation of flavin occurs and leads to inactivated state. Perceives low blue light (LBL) and responds by directly contacting two bHLH transcription factors, PIF4 and PIF5, at chromatin on E-box variant 5'-CA[CT]GTG-3' to promote their activity and stimulate specific gene expression to adapt global physiology (e.g. hypocotyl elongation and hyponastic growth in low blue light). When activated by high-intensity blue light, catalyzes direct enzymatic conversion of molecular oxygen O(2) to reactive oxygen species (ROS) and hydrogen peroxide H(2)O(2) in vitro. ROS accumulation upon activation by blue light leads to cell death in protoplasts. Seems essential for blue-light-triggered and singlet oxygen-mediated programmed cell death (PCD). Required for the induction of nuclear genes encoding photoprotective components by GATA24 and GATA28 in extreme light intensities that exceed the electron utilization capacity of the chloroplast. Involved in shortening the circadian clock period, especially at 27 degrees Celsius, in blue light (BL) and required to maintain clock genes expression rhythm. Mediates blue light-induced gene expression and hypocotyl elongation through the inhibition of COP1-mediated degradation of the transcription factors BIT1 and HY5 and via the activation of anion channels at the plasma membrane, probably via auxin signaling. Required for the hypocotyl hook formation in darkness. Involved in blue light-dependent stomatal opening, CHS gene expression, transpiration, inhibition of stem growth and increase of root growth, probably by regulating abscisic acid (ABA). Prevents lateral roots growth by inhibiting auxin transport. Necessary for shade avoidance syndrome (SAS), characterized by leaf hyponasty and reduced lamina/petiole ratio, when exposed to blue light attenuation. Together with phototropins, involved in phototropism regulation by various blue light fluence; blue light attenuates phototropism in high fluence rates (100 umol.m-2.s-1) but enhances phototropism in low fluence rates (&lt;1.0 umol.m-2.s-1). Required for blue/UV-A wavelengths-mediated inhibition of explants shoot regeneration in vitro (e.g. new shoot apical meristems regeneration from excised cotyledons). Modulates anthocyanin accumulation in a PHYA-dependent manner in far-red-light. Acts as a PHYA/PHYB-dependent modulator of chlorophyll accumulation in red light. Contributes to most blue light deetiolation responses. May act as a chemical magnetoreceptor, via magnetically sensitive kinetics and quantum yields of photo-induced flavin / tryptophan radical pairs. The effect of near-null magnetic field on flowering is altered by changes of blue light cycle and intensity in a CRY1/CRY2-dependent manner. Involved in the strigolactone signaling that regulates hypocotyl growth in response to blue light. Modulates temperature-dependent growth and physiology maintenance, especially at warm ambient temperatures (e.g. 27 degrees Celsius) and in white light and low-light conditions, via HFR1-dependent activity; this process requires PTAC12/HMR/PAP5 (transcriptional transactivator). In terms of biological role, implicated in promoting R protein-mediated resistance to Pseudomonas syringae pv. tomato (Pst.) DC3000 under continuous light conditions. Promotes systemic acquired resistance (SAR) and PR gene expression triggered by P.syringae. This Arabidopsis thaliana (Mouse-ear cress) protein is Cryptochrome-1.